The chain runs to 398 residues: Phosphoglycerate kinase (398 aa).

Residues aspartate 21–asparagine 23, arginine 36, histidine 59–arginine 62, arginine 119, and arginine 157 contribute to the substrate site. Residues lysine 208, glycine 296, glutamate 327, and glycine 354 to serine 357 contribute to the ATP site.

The protein belongs to the phosphoglycerate kinase family. Monomer.

It is found in the cytoplasm. It carries out the reaction (2R)-3-phosphoglycerate + ATP = (2R)-3-phospho-glyceroyl phosphate + ADP. It participates in carbohydrate degradation; glycolysis; pyruvate from D-glyceraldehyde 3-phosphate: step 2/5. The chain is Phosphoglycerate kinase from Lactococcus lactis subsp. cremoris (strain SK11).